Reading from the N-terminus, the 396-residue chain is Dimethyladenosine transferase 2, mitochondrial (396 aa).

The transit peptide at Met1–Phe43 directs the protein to the mitochondrion. Residues Phe43–Thr71 form a disordered region. S-adenosyl-L-methionine-binding residues include Ile74, Glu123, and Asp149. Positions Lys328–Arg329 are DNA-binding.

The protein belongs to the class I-like SAM-binding methyltransferase superfamily. rRNA adenine N(6)-methyltransferase family. KsgA subfamily. As to quaternary structure, homodimer. Component of the mitochondrial transcription initiation complex, composed at least of TFB2M, TFAM and POLRMT. In this complex TFAM recruits POLRMT to the promoter whereas TFB2M induces structural changes in POLRMT to enable promoter opening and trapping of the DNA non-template strand. Interacts with mitochondrial RNA polymerase POLRMT. Interacts with TFAM. In terms of tissue distribution, ubiquitously expressed.

Its subcellular location is the mitochondrion. It carries out the reaction adenosine in rRNA + S-adenosyl-L-methionine = N(6)-methyladenosine in rRNA + S-adenosyl-L-homocysteine + H(+). S-adenosyl-L-methionine-dependent rRNA methyltransferase which may methylate two specific adjacent adenosines in the loop of a conserved hairpin near the 3'-end of 12S mitochondrial rRNA. Component of the mitochondrial transcription initiation complex, composed at least of TFB2M, TFAM and POLRMT that is required for basal transcription of mitochondrial DNA. In this complex, TFAM recruits POLRMT to a specific promoter whereas TFB2M induces structural changes in POLRMT to enable promoter opening and trapping of the DNA non-template strand. Stimulates transcription independently of the methyltransferase activity. The polypeptide is Dimethyladenosine transferase 2, mitochondrial (Mus musculus (Mouse)).